A 464-amino-acid chain; its full sequence is Glutamate--tRNA ligase (464 aa).

The short motif at 10 to 20 is the 'HIGH' region element; that stretch reads PSPTGHLHLGG. 4 residues coordinate Zn(2+): Cys99, Cys101, Cys126, and Glu128. Residues 236–240 carry the 'KMSKS' region motif; the sequence is KLSKR. Lys239 contacts ATP.

Belongs to the class-I aminoacyl-tRNA synthetase family. Glutamate--tRNA ligase type 1 subfamily. In terms of assembly, monomer. Zn(2+) is required as a cofactor.

The protein resides in the cytoplasm. It carries out the reaction tRNA(Glu) + L-glutamate + ATP = L-glutamyl-tRNA(Glu) + AMP + diphosphate. Its function is as follows. Catalyzes the attachment of glutamate to tRNA(Glu) in a two-step reaction: glutamate is first activated by ATP to form Glu-AMP and then transferred to the acceptor end of tRNA(Glu). This Oleidesulfovibrio alaskensis (strain ATCC BAA-1058 / DSM 17464 / G20) (Desulfovibrio alaskensis) protein is Glutamate--tRNA ligase.